The chain runs to 273 residues: Nitrogenase iron protein 4 (273 aa).

8-15 (GKGGIGKS) serves as a coordination point for ATP. Cysteine 94 is a [4Fe-4S] cluster binding site. Arginine 97 carries the ADP-ribosylarginine; by dinitrogenase reductase ADP-ribosyltransferase modification. Cysteine 129 is a [4Fe-4S] cluster binding site.

Belongs to the NifH/BchL/ChlL family. In terms of assembly, homodimer. It depends on [4Fe-4S] cluster as a cofactor. The reversible ADP-ribosylation of Arg-97 inactivates the nitrogenase reductase and regulates nitrogenase activity.

The enzyme catalyses N2 + 8 reduced [2Fe-2S]-[ferredoxin] + 16 ATP + 16 H2O = H2 + 8 oxidized [2Fe-2S]-[ferredoxin] + 2 NH4(+) + 16 ADP + 16 phosphate + 6 H(+). Its function is as follows. The key enzymatic reactions in nitrogen fixation are catalyzed by the nitrogenase complex, which has 2 components: the iron protein and the molybdenum-iron protein. The sequence is that of Nitrogenase iron protein 4 (nifH4) from Clostridium pasteurianum.